A 224-amino-acid polypeptide reads, in one-letter code: Cytidylate kinase (224 aa).

11–19 (GPAAAGKST) contributes to the ATP binding site.

Belongs to the cytidylate kinase family. Type 1 subfamily.

It is found in the cytoplasm. The catalysed reaction is CMP + ATP = CDP + ADP. The enzyme catalyses dCMP + ATP = dCDP + ADP. The chain is Cytidylate kinase from Geobacillus sp. (strain WCH70).